Reading from the N-terminus, the 370-residue chain is Glutathione S-transferase omega-like 2 (370 aa).

R15 contacts glutathione. The active-site Nucleophile is C46. W79, R155, V158, E173, and S174 together coordinate glutathione. The region spanning 201-353 (PAQLKTQIDD…LHYTRSHTRI (153 aa)) is the GST C-terminal domain.

This sequence belongs to the GST superfamily. Omega family. As to quaternary structure, homodimer.

It localises to the cytoplasm. The enzyme catalyses RX + glutathione = an S-substituted glutathione + a halide anion + H(+). The catalysed reaction is L-dehydroascorbate + 2 glutathione = glutathione disulfide + L-ascorbate. Active as '1-Cys' thiol transferase against beta-hydroxyethyl disulfide (HED), as dehydroascorbate reductase and as dimethylarsinic acid reductase, while not active against the standard GST substrate 1-chloro-2,4-dinitrobenzene (CDNB). May be involved in cell wall organization and biogenesis. In Saccharomyces cerevisiae (strain ATCC 204508 / S288c) (Baker's yeast), this protein is Glutathione S-transferase omega-like 2.